The following is a 170-amino-acid chain: Shikimate kinase (170 aa).

ATP is bound at residue 11 to 16; it reads LSGKST. Mg(2+) is bound at residue S15. Substrate-binding residues include D33, R57, and G79. R119 is an ATP binding site. R137 contacts substrate.

Belongs to the shikimate kinase family. As to quaternary structure, monomer. It depends on Mg(2+) as a cofactor.

The protein resides in the cytoplasm. The catalysed reaction is shikimate + ATP = 3-phosphoshikimate + ADP + H(+). Its pathway is metabolic intermediate biosynthesis; chorismate biosynthesis; chorismate from D-erythrose 4-phosphate and phosphoenolpyruvate: step 5/7. Catalyzes the specific phosphorylation of the 3-hydroxyl group of shikimic acid using ATP as a cosubstrate. In Clostridium botulinum (strain Langeland / NCTC 10281 / Type F), this protein is Shikimate kinase.